The following is a 134-amino-acid chain: MENKKTIYFLCTGNSCRSQMAEAWGKQYLGDKWNVYSAGIEAHGVNPNAIKAMNEVNIDITNQTSDIIDANILNRADLVVTLCSHADSVCPSTPPHINRVHWGFDDPAGKEWSEFQRVRDEIGERIKRFSETGE.

Catalysis depends on nucleophile residues Cys-11, Cys-83, and Cys-90. 2 disulfides stabilise this stretch: Cys-11-Cys-83 and Cys-83-Cys-90.

The protein belongs to the low molecular weight phosphotyrosine protein phosphatase family. Thioredoxin-coupled ArsC subfamily.

It localises to the cytoplasm. The enzyme catalyses arsenate + [thioredoxin]-dithiol + H(+) = arsenite + [thioredoxin]-disulfide + H2O. Its function is as follows. Catalyzes the reduction of arsenate [As(V)] to arsenite [As(III)]. This Bacillus cereus (strain ATCC 10987 / NRS 248) protein is Arsenate reductase 2.